A 197-amino-acid chain; its full sequence is Adrenodoxin-like protein 1, mitochondrial (197 aa).

Residues 1-35 constitute a mitochondrion transit peptide; that stretch reads MIGHRISRLGSTIVKQLAREGYLATYGTKNLHRSY. A 2Fe-2S ferredoxin-type domain is found at 79–184; sequence EKITIIFVDK…GVRLAIPSAT (106 aa). The [2Fe-2S] cluster site is built by Cys-118, Cys-124, Cys-127, and Cys-165.

The protein belongs to the adrenodoxin/putidaredoxin family. [2Fe-2S] cluster serves as cofactor.

The protein localises to the mitochondrion matrix. Functionally, associates in vitro with the adrenodoxin reductase MFDR to form an efficient low potential electron transfer chain that is able to reduce cytochrome C. Functions as accessory mitochondrial protein involved with BIO2 in the plant biotin synthase reaction. The sequence is that of Adrenodoxin-like protein 1, mitochondrial from Arabidopsis thaliana (Mouse-ear cress).